The chain runs to 327 residues: Fructose-1,6-bisphosphatase class 1 (327 aa).

Glu84, Asp103, Leu105, and Asp106 together coordinate Mg(2+). Substrate contacts are provided by residues 106 to 109 (DGSS), Asn197, and Lys263. Mg(2+) is bound at residue Glu269.

This sequence belongs to the FBPase class 1 family. As to quaternary structure, homotetramer. Mg(2+) serves as cofactor.

The protein resides in the cytoplasm. It catalyses the reaction beta-D-fructose 1,6-bisphosphate + H2O = beta-D-fructose 6-phosphate + phosphate. Its pathway is carbohydrate biosynthesis; gluconeogenesis. This is Fructose-1,6-bisphosphatase class 1 from Idiomarina loihiensis (strain ATCC BAA-735 / DSM 15497 / L2-TR).